The primary structure comprises 399 residues: Stomatin-like protein 1 (399 aa).

The Tyrosine-type lysosomal sorting signal motif lies at Gly-6–Leu-10. At Ser-28 the chain carries Phosphoserine. A helical; Signal-anchor for type III membrane protein membrane pass occupies residues Leu-58–Ala-78. Topologically, residues Leu-79–Lys-399 are cytoplasmic. An SCP2 domain is found at Lys-288 to Lys-399.

It belongs to the band 7/mec-2 family. Interacts with STOM; may redistribute STOM from the plasma membrane to late endosomes. In terms of tissue distribution, expressed in dorsal root ganglion neurons.

The protein localises to the membrane. It localises to the cytoplasmic vesicle. The protein resides in the cell membrane. Its subcellular location is the late endosome membrane. It is found in the membrane raft. Its function is as follows. May play a role in cholesterol transfer to late endosomes. May play a role in modulating membrane acid-sensing ion channels. Can specifically inhibit proton-gated current of ASIC1 isoform 1. Can increase inactivation speed of ASIC3. May be involved in regulation of proton sensing in dorsal root ganglions. This is Stomatin-like protein 1 (Stoml1) from Mus musculus (Mouse).